Reading from the N-terminus, the 344-residue chain is N-acetyl-gamma-glutamyl-phosphate reductase (344 aa).

Cys-148 is a catalytic residue.

The protein belongs to the NAGSA dehydrogenase family. Type 1 subfamily.

Its subcellular location is the cytoplasm. The enzyme catalyses N-acetyl-L-glutamate 5-semialdehyde + phosphate + NADP(+) = N-acetyl-L-glutamyl 5-phosphate + NADPH + H(+). It participates in amino-acid biosynthesis; L-arginine biosynthesis; N(2)-acetyl-L-ornithine from L-glutamate: step 3/4. In terms of biological role, catalyzes the NADPH-dependent reduction of N-acetyl-5-glutamyl phosphate to yield N-acetyl-L-glutamate 5-semialdehyde. The protein is N-acetyl-gamma-glutamyl-phosphate reductase of Clostridium kluyveri (strain NBRC 12016).